A 350-amino-acid polypeptide reads, in one-letter code: Tsukushi (350 aa).

An N-terminal signal peptide occupies residues 1-17 (MAPSWLFLLFIPGMVGS). The 42-residue stretch at 18–59 (SRSCFPGCQCIVDNFGLFHSFSLTKVDCSGVGPHVVPVSIPL) folds into the LRRNT domain. 10 LRR repeats span residues 60–81 (DTSYLDLSANGIKRINESVLSG), 86–107 (TLINLNLSHNQIVRISFSTFSK), 110–131 (YLESLDLSHNLLETLPDGSFLY), 133–154 (RLTELDLSSNKLLEVGIGAFTL), 159–180 (RSMTINLGNNNIRSIHRGAERP), 183–203 (NIHSLTLSGNDLLSVPDLHGI), 204–225 (PLRHLDLDRNPLAKIEKESFLG), 228–250 (GLTHLSLSDLPNLREVSPYSFKT), 253–275 (SLLDLDLSSNPQLKSLSSDMFFG), and 278–299 (SLQELNLAYSGVAALPKDIMLN). N75 and N91 each carry an N-linked (GlcNAc...) asparagine glycan.

Interacts with bmp4. Interacts with dll1 (via extracellular region). Interacts with fgf8; inhibits fgf8 signaling. Interacts with nodal2/Xnr2; enhances nodal2 activity.

The protein localises to the secreted. Contributes to various developmental events through its interactions with multiple signaling pathways. Dorsalizing factor which functions as an inhibitor of bone morphogenetic proteins (BMP) during gastrulation. Promotes dll1-dependent activation of Notch signaling and is required for neural crest formation. Induces endoderm and dorsal mesoderm formation by enhancing nodal2/Xnr2 activity while inhibiting ventrolateral mesoderm formation through inhibition of fgf8. The protein is Tsukushi (tsku) of Xenopus tropicalis (Western clawed frog).